We begin with the raw amino-acid sequence, 572 residues long: Arginine--tRNA ligase (572 aa).

The 'HIGH' region motif lies at 122–132 (PNLAKEMHVGH).

Belongs to the class-I aminoacyl-tRNA synthetase family. As to quaternary structure, monomer.

The protein localises to the cytoplasm. It catalyses the reaction tRNA(Arg) + L-arginine + ATP = L-arginyl-tRNA(Arg) + AMP + diphosphate. The protein is Arginine--tRNA ligase of Neisseria gonorrhoeae (strain NCCP11945).